A 944-amino-acid polypeptide reads, in one-letter code: Valine--tRNA ligase (944 aa).

The 'HIGH' region motif lies at 43–53 (PNVTGTLHMGH). Residues 550-554 (KMSKS) carry the 'KMSKS' region motif. Position 553 (Lys553) interacts with ATP. Residues 878 to 942 (LVDMDAERTR…QLTGLREQRA (65 aa)) adopt a coiled-coil conformation.

It belongs to the class-I aminoacyl-tRNA synthetase family. ValS type 1 subfamily. As to quaternary structure, monomer.

The protein localises to the cytoplasm. It catalyses the reaction tRNA(Val) + L-valine + ATP = L-valyl-tRNA(Val) + AMP + diphosphate. In terms of biological role, catalyzes the attachment of valine to tRNA(Val). As ValRS can inadvertently accommodate and process structurally similar amino acids such as threonine, to avoid such errors, it has a 'posttransfer' editing activity that hydrolyzes mischarged Thr-tRNA(Val) in a tRNA-dependent manner. This Xanthomonas axonopodis pv. citri (strain 306) protein is Valine--tRNA ligase.